The primary structure comprises 162 residues: Nucleotide-binding protein Francci3_0558 (162 aa).

The protein belongs to the YajQ family.

In terms of biological role, nucleotide-binding protein. This chain is Nucleotide-binding protein Francci3_0558, found in Frankia casuarinae (strain DSM 45818 / CECT 9043 / HFP020203 / CcI3).